Consider the following 445-residue polypeptide: Xylose isomerase (445 aa).

Residues H99 and D102 contribute to the active site. 7 residues coordinate Mg(2+): E230, E266, H269, D294, D305, D307, and D337.

Belongs to the xylose isomerase family. As to quaternary structure, homotetramer. Requires Mg(2+) as cofactor.

The protein resides in the cytoplasm. It carries out the reaction alpha-D-xylose = alpha-D-xylulofuranose. This is Xylose isomerase from Geobacillus kaustophilus (strain HTA426).